Reading from the N-terminus, the 329-residue chain is GMP reductase (329 aa).

The active-site Thioimidate intermediate is C178. 207 to 230 (VIADGGIRTHGDIAKSIRMGATMV) serves as a coordination point for NADP(+).

It belongs to the IMPDH/GMPR family. GuaC type 2 subfamily.

It catalyses the reaction IMP + NH4(+) + NADP(+) = GMP + NADPH + 2 H(+). In terms of biological role, catalyzes the irreversible NADPH-dependent deamination of GMP to IMP. It functions in the conversion of nucleobase, nucleoside and nucleotide derivatives of G to A nucleotides, and in maintaining the intracellular balance of A and G nucleotides. The protein is GMP reductase of Lactococcus lactis subsp. lactis (strain IL1403) (Streptococcus lactis).